The sequence spans 492 residues: Homoserine O-acetyltransferase (492 aa).

The AB hydrolase-1 domain occupies 47–354 (NVILVCHALT…NYGHDAFLLE (308 aa)). Ser-152 functions as the Nucleophile in the catalytic mechanism. Residue Arg-221 coordinates substrate. Residues Asp-315 and His-348 contribute to the active site. Asp-349 provides a ligand contact to substrate. CBS domains lie at 375–432 (MKLD…FTTL) and 436–492 (LTKN…HRCT).

This sequence belongs to the AB hydrolase superfamily. MetX family. As to quaternary structure, homodimer.

The protein resides in the cytoplasm. The enzyme catalyses L-homoserine + acetyl-CoA = O-acetyl-L-homoserine + CoA. Its pathway is amino-acid biosynthesis; L-methionine biosynthesis via de novo pathway; O-acetyl-L-homoserine from L-homoserine: step 1/1. Functionally, transfers an acetyl group from acetyl-CoA to L-homoserine, forming acetyl-L-homoserine. The sequence is that of Homoserine O-acetyltransferase from Methanosalsum zhilinae (strain DSM 4017 / NBRC 107636 / OCM 62 / WeN5) (Methanohalophilus zhilinae).